A 226-amino-acid chain; its full sequence is MATPASITNVTVEFLQFPALVTPPGSTKSYFLGGAGVRGLNIQEEFVKFTGIGVYLEDKAVSSLAAKWKGKSAAELLDSLDFYRDIIKGPFEKLIRGSKLRTLDGREYVRKVSENCVAHMQSVGTYSDEEEKAIEEFRNAFKDQNFPPGSTVFYKQSPTGTLGLSFSKDETIPEHEHAVIDNKPLSEAVLETMIGEIPVSPALKESLATRFHQFFKELEANPNIEN.

3 residues coordinate substrate: T50, N115, and T192.

Belongs to the chalcone isomerase family.

It carries out the reaction a chalcone = a flavanone.. The protein operates within secondary metabolite biosynthesis; flavonoid biosynthesis. Functionally, catalyzes the intramolecular cyclization of bicyclic chalcones into tricyclic (S)-flavanones. Responsible for the isomerization of 4,2',4',6'-tetrahydroxychalcone (also termed chalcone) into naringenin. The chain is Chalcone--flavanone isomerase 1B-1 (CHI1B1) from Glycine max (Soybean).